The following is a 533-amino-acid chain: Lymphocyte cytosolic protein 2 (533 aa).

The SAM domain occupies Val12 to Arg78. Tyr23 bears the Phosphotyrosine mark. Disordered regions lie at residues Arg78 to His359 and Ser374 to Asp419. Over residues Glu94–Asp144 the composition is skewed to acidic residues. The segment covering Asn151 to Met172 has biased composition (polar residues). A compositionally biased stretch (pro residues) spans Pro186 to Pro201. Phosphoserine occurs at positions 207 and 210. The segment covering Asn340–Thr354 has biased composition (polar residues). Residues Ser376 and Ser410 each carry the phosphoserine modification. The segment covering Leu400–Pro411 has biased composition (pro residues). The 109-residue stretch at Trp422–Ala530 folds into the SH2 domain.

In terms of assembly, interacts with SLA. Interacts with CBLB. Interacts with GRB2. Interacts with SHB. Interacts with PRAM1. Interacts (via SH2 domain) with CD6 (via tyrosine phosphorylated C-terminus). Interacts with FYB1 and the phosphorylated form of FYB2. Interacts with 14-3-3 adapter/YWHAZ; this phosphorylation leads to YWHAZ proteolytic degradation. Interacts with VAV1; this interaction plays a role in TCR-mediated cytokine production. Interacts with AGER; this interaction plays an important role in AGER-mediated pro-inflammatory responses and cytokine release. Post-translationally, phosphorylated after T-cell receptor activation by ZAP70, ITK and TXK, which leads to the up-regulation of Th1 preferred cytokine IL-2. SYK-dependent phosphorylation is required for recruitment of PI3K signaling components. Highly expressed in spleen, thymus, and peripheral blood leukocytes.

Its subcellular location is the cytoplasm. Its function is as follows. Adapter protein primarily involved in signaling pathways within T-cells, as well as other immune cells such as platelets, mast cells, and natural killer (NK) cells. Plays a crucial role for transducing signal from the T-cell receptor (TCR) after antigen recognition leading to T-cell activation. Mechanistically, once phosphorylated by the kinase ZAP70, mediates interactions with the guanine-nucleotide exchange factor VAV1, the adapter protein NCK and the kinase ITK. In turn, stimulates the activation of PKC-theta/PRKCQ and NF-kappa-B transcriptional activity in response to CD3 and CD28 costimulation. Also plays an essential role in AGER-induced signaling pathways including p38 MAPK and ERK1/2 activation leading to cytokine release and pro-inflammatory responses. This is Lymphocyte cytosolic protein 2 (Lcp2) from Mus musculus (Mouse).